Here is a 266-residue protein sequence, read N- to C-terminus: MSSSVGLDTIVSSLVKSSPPGELDGISQDLSAILSSKSNSSTVNTAIEKYINENSGVFSSTYIASKINKHESSTKYIDFIGKKLFNIDLHKQTAIDFEDYEPEVKYPAYFDELVKKLTEYGEDHYPSKYAFTIVPDGSDLQIIIIGQKLNYENFYTGLWKSHYKIKSGSIEGEAKLDIHYYEDGNVRLNFEESTSGTLSSSNASEIVNFINNAENEMTLKIVEDFNELNQKYFKNLRRLLPVTRSKINWGQAIGNYRLGSDVVHNK.

Belongs to the F-actin-capping protein alpha subunit family. Heterodimer of an alpha and a beta subunit.

The protein localises to the cytoplasm. Its subcellular location is the cytoskeleton. F-actin-capping proteins bind in a Ca(2+)-independent manner to the fast growing ends of actin filaments (barbed end) thereby blocking the exchange of subunits at these ends. Unlike other capping proteins (such as gelsolin and severin), these proteins do not sever actin filaments. The chain is F-actin-capping protein subunit alpha (CAP1) from Debaryomyces hansenii (strain ATCC 36239 / CBS 767 / BCRC 21394 / JCM 1990 / NBRC 0083 / IGC 2968) (Yeast).